A 591-amino-acid chain; its full sequence is V-type ATP synthase alpha chain (591 aa).

233–240 (GPFGAGKT) provides a ligand contact to ATP.

The protein belongs to the ATPase alpha/beta chains family.

It catalyses the reaction ATP + H2O + 4 H(+)(in) = ADP + phosphate + 5 H(+)(out). Functionally, produces ATP from ADP in the presence of a proton gradient across the membrane. The V-type alpha chain is a catalytic subunit. This chain is V-type ATP synthase alpha chain, found in Streptococcus pyogenes serotype M28 (strain MGAS6180).